The chain runs to 129 residues: Small ribosomal subunit protein uS11 (129 aa).

Belongs to the universal ribosomal protein uS11 family. As to quaternary structure, part of the 30S ribosomal subunit. Interacts with proteins S7 and S18. Binds to IF-3.

Its function is as follows. Located on the platform of the 30S subunit, it bridges several disparate RNA helices of the 16S rRNA. Forms part of the Shine-Dalgarno cleft in the 70S ribosome. This chain is Small ribosomal subunit protein uS11, found in Dinoroseobacter shibae (strain DSM 16493 / NCIMB 14021 / DFL 12).